Here is a 452-residue protein sequence, read N- to C-terminus: Trigger factor (452 aa).

Residues 162–247 (GDTVTIDYKG…IHEVKSKQLP (86 aa)) enclose the PPIase FKBP-type domain. A disordered region spans residues 427–452 (AKAKLEAKEAEEAEDKEEAEDKKENK).

It belongs to the FKBP-type PPIase family. Tig subfamily.

It is found in the cytoplasm. It carries out the reaction [protein]-peptidylproline (omega=180) = [protein]-peptidylproline (omega=0). In terms of biological role, involved in protein export. Acts as a chaperone by maintaining the newly synthesized protein in an open conformation. Functions as a peptidyl-prolyl cis-trans isomerase. This chain is Trigger factor, found in Lactobacillus helveticus (strain DPC 4571).